We begin with the raw amino-acid sequence, 125 residues long: Large ribosomal subunit protein bL20 (125 aa).

The protein belongs to the bacterial ribosomal protein bL20 family.

Its function is as follows. Binds directly to 23S ribosomal RNA and is necessary for the in vitro assembly process of the 50S ribosomal subunit. It is not involved in the protein synthesizing functions of that subunit. This Rhizorhabdus wittichii (strain DSM 6014 / CCUG 31198 / JCM 15750 / NBRC 105917 / EY 4224 / RW1) (Sphingomonas wittichii) protein is Large ribosomal subunit protein bL20.